Here is a 33-residue protein sequence, read N- to C-terminus: Protein YtiC (33 aa).

A helical membrane pass occupies residues 10–29 (FDMLSIYIIYKLIVSNNTWL).

It is found in the cell inner membrane. This Escherichia coli (strain K12) protein is Protein YtiC.